Reading from the N-terminus, the 448-residue chain is Tubulin alpha-4A chain (448 aa).

Positions 1–4 match the MREC motif motif; that stretch reads MREC. Gln-11 contacts GTP. Lys-40 bears the N6-acetyllysine mark. At Ser-48 the chain carries Phosphoserine. Residue Glu-71 participates in GTP binding. Residue Glu-71 participates in Mg(2+) binding. A 3'-nitrotyrosine modification is found at Tyr-83. Positions 140, 144, 145, 179, 206, and 228 each coordinate GTP. Residue Glu-254 is part of the active site. The residue at position 432 (Tyr-432) is a Phosphotyrosine. The residue at position 439 (Ser-439) is a Phosphoserine.

Belongs to the tubulin family. As to quaternary structure, dimer of alpha and beta chains. A typical microtubule is a hollow water-filled tube with an outer diameter of 25 nm and an inner diameter of 15 nM. Alpha-beta heterodimers associate head-to-tail to form protofilaments running lengthwise along the microtubule wall with the beta-tubulin subunit facing the microtubule plus end conferring a structural polarity. Microtubules usually have 13 protofilaments but different protofilament numbers can be found in some organisms and specialized cells. Interacts with CFAP157. Mg(2+) serves as cofactor. Post-translationally, some glutamate residues at the C-terminus are polyglycylated, resulting in polyglycine chains on the gamma-carboxyl group. Glycylation is mainly limited to tubulin incorporated into axonemes (cilia and flagella) whereas glutamylation is prevalent in neuronal cells, centrioles, axonemes, and the mitotic spindle. Both modifications can coexist on the same protein on adjacent residues, and lowering polyglycylation levels increases polyglutamylation, and reciprocally. Cilia and flagella glycylation is required for their stability and maintenance. Flagella glycylation controls sperm motility. Some glutamate residues at the C-terminus are polyglutamylated, resulting in polyglutamate chains on the gamma-carboxyl group. Polyglutamylation plays a key role in microtubule severing by spastin (SPAST). SPAST preferentially recognizes and acts on microtubules decorated with short polyglutamate tails: severing activity by SPAST increases as the number of glutamates per tubulin rises from one to eight, but decreases beyond this glutamylation threshold. Glutamylation is also involved in cilia motility. In terms of processing, acetylation of alpha chains at Lys-40 is located inside the microtubule lumen. This modification has been correlated with increased microtubule stability, intracellular transport and ciliary assembly. Post-translationally, methylation of alpha chains at Lys-40 is found in mitotic microtubules and is required for normal mitosis and cytokinesis contributing to genomic stability. Although this tubulin does not encode a C-terminal tyrosine, a C-terminal tyrosine can be added post-translationally by the tubulin tyrosine ligase (TTL). It can then undergo a detyrosination cycle by the tubulin tyrosine carboxypeptidase (MATCAP1/KIAA0895L).

The protein localises to the cytoplasm. It is found in the cytoskeleton. The catalysed reaction is GTP + H2O = GDP + phosphate + H(+). Tubulin is the major constituent of microtubules, a cylinder consisting of laterally associated linear protofilaments composed of alpha- and beta-tubulin heterodimers. Microtubules grow by the addition of GTP-tubulin dimers to the microtubule end, where a stabilizing cap forms. Below the cap, tubulin dimers are in GDP-bound state, owing to GTPase activity of alpha-tubulin. The protein is Tubulin alpha-4A chain (TUBA4A) of Macaca fascicularis (Crab-eating macaque).